The sequence spans 178 residues: Deoxycytidylate deaminase (178 aa).

The CMP/dCMP-type deaminase domain occupies Glu-14 to Phe-145. Position 84 (His-84) interacts with Zn(2+). Residue Glu-86 is the Proton donor of the active site. Zn(2+) is bound by residues Cys-110 and Cys-113. Ser-174 is subject to Phosphoserine.

It belongs to the cytidine and deoxycytidylate deaminase family. Homohexamer. Requires Zn(2+) as cofactor.

It carries out the reaction dCMP + H2O + H(+) = dUMP + NH4(+). The catalysed reaction is 5-hydroxymethyl-dCMP + H2O + H(+) = 5-hydroxymethyl-dUMP + NH4(+). Its activity is regulated as follows. Allosteric enzyme whose activity is greatly influenced by the end products of its metabolic pathway, dCTP and dTTP. Functionally, catalyzes the deamination of dCMP to dUMP, providing the nucleoside monophosphate substrate for the thymidylate synthase/TYMS. Also, part of a nucleotide salvage pathway that eliminates epigenetically modified 5-hydroxymethyl-dCMP (hmdCMP) in a two-step process entailing deamination to cytotoxic 5-hydroxymethyl-dUMP (hmdUMP), followed by its hydrolysis into 5-hydroxymethyluracil (hmU) and 2-deoxy-D-ribose 5-phosphate (deoxyribosephosphate). Catalyzes the first step in that pathway, the deamination of 5-hydroxymethyl-dCMP (hmdCMP). The sequence is that of Deoxycytidylate deaminase from Homo sapiens (Human).